Reading from the N-terminus, the 160-residue chain is Small RNA binding protein 1 (160 aa).

The region spanning 8–86 (FRCFVGGLAW…RNITVNEAQQ (79 aa)) is the RRM domain. Residues 82–160 (NEAQQRGGGG…GGGSEGGWRN (79 aa)) form a disordered region. Residues 87–160 (RGGGGGGGYN…GGGSEGGWRN (74 aa)) show a composition bias toward gly residues. The segment at 88–157 (GGGGGGGYNR…GSGGGGSEGG (70 aa)) is glycine-rich (GR) required for cell-to-cell movement.

It belongs to the GR-RBP family. Binds to small phloem-mobile single-stranded RNAs (ss-sRNA, e.g. small interfering RNA (siRNA) and microRNA (miRNA)) in the phloeme exudate, including viral-derived sRNA (vsiRNA). Accumulates in phloem exudates.

Its subcellular location is the secreted. Functionally, possibly has a role in RNA transcription or processing during stress. Binds sequence non-specifically to RNAs and DNAs. Mediates cell-to-cell trafficking of RNA interference (RNAi) signals (small RNAs (sRNA), e.g. small interfering RNA (siRNA) and microRNA (miRNA)) which regulate growth and development, as well as responses to environmental inputs, including pathogen attack; can compromise zucchini yellow mosaic virus (ZYMV) and tobacco rattle virus (TRV) infections at the early stage. In Cucumis sativus (Cucumber), this protein is Small RNA binding protein 1.